Here is a 283-residue protein sequence, read N- to C-terminus: Phosphatidylglycerol--prolipoprotein diacylglyceryl transferase (283 aa).

4 consecutive transmembrane segments (helical) span residues 17–37, 56–76, 92–112, and 117–137; these read LAVRWYALSYILGFILFTFLG, FLTWGILGVIFGGRLGYVLFY, WEGGMSFHGGFLGVVIAIWLF, and GIGFLKLMDTVAPLVPLGLAS. Arginine 139 contacts a 1,2-diacyl-sn-glycero-3-phospho-(1'-sn-glycerol). The next 3 helical transmembrane spans lie at 194–214, 222–242, and 255–275; these read PSQLYQFALEGICLFAVVWLF, GQVASLFLGGYGIFRFIAEFA, and GLSMGQWLSVPMIVLGIVGFV.

This sequence belongs to the Lgt family.

Its subcellular location is the cell inner membrane. It carries out the reaction L-cysteinyl-[prolipoprotein] + a 1,2-diacyl-sn-glycero-3-phospho-(1'-sn-glycerol) = an S-1,2-diacyl-sn-glyceryl-L-cysteinyl-[prolipoprotein] + sn-glycerol 1-phosphate + H(+). Its pathway is protein modification; lipoprotein biosynthesis (diacylglyceryl transfer). Functionally, catalyzes the transfer of the diacylglyceryl group from phosphatidylglycerol to the sulfhydryl group of the N-terminal cysteine of a prolipoprotein, the first step in the formation of mature lipoproteins. The chain is Phosphatidylglycerol--prolipoprotein diacylglyceryl transferase from Neisseria meningitidis serogroup C (strain 053442).